We begin with the raw amino-acid sequence, 494 residues long: Aspartyl/glutamyl-tRNA(Asn/Gln) amidotransferase subunit B (494 aa).

The protein belongs to the GatB/GatE family. GatB subfamily. Heterotrimer of A, B and C subunits.

The catalysed reaction is L-glutamyl-tRNA(Gln) + L-glutamine + ATP + H2O = L-glutaminyl-tRNA(Gln) + L-glutamate + ADP + phosphate + H(+). The enzyme catalyses L-aspartyl-tRNA(Asn) + L-glutamine + ATP + H2O = L-asparaginyl-tRNA(Asn) + L-glutamate + ADP + phosphate + 2 H(+). In terms of biological role, allows the formation of correctly charged Asn-tRNA(Asn) or Gln-tRNA(Gln) through the transamidation of misacylated Asp-tRNA(Asn) or Glu-tRNA(Gln) in organisms which lack either or both of asparaginyl-tRNA or glutaminyl-tRNA synthetases. The reaction takes place in the presence of glutamine and ATP through an activated phospho-Asp-tRNA(Asn) or phospho-Glu-tRNA(Gln). The sequence is that of Aspartyl/glutamyl-tRNA(Asn/Gln) amidotransferase subunit B from Synechococcus sp. (strain CC9605).